We begin with the raw amino-acid sequence, 388 residues long: Na(+)/H(+) antiporter NhaA (388 aa).

At 1 to 11 the chain is on the cytoplasmic side; sequence MKHLHRFFSSD. A helical membrane pass occupies residues 12–31; it reads ASGGIILIIAAILAMIMANS. Residues 32-58 are Periplasmic-facing; it reads GATSGWYHDFLETPVQLRVGSLEINKN. A helical transmembrane segment spans residues 59–80; it reads MLLWINDALMAVFFLLVGLEVK. Topologically, residues 81–96 are cytoplasmic; the sequence is RELMQGSLASLRQAAF. Residues 97–116 form a helical membrane-spanning segment; sequence PVIAAIGGMIVPALLYLAFN. At 117–122 the chain is on the periplasmic side; that stretch reads YADPIT. Residues 123 to 130 traverse the membrane as a helical segment; it reads REGWAIPA. Over 131-154 the chain is Cytoplasmic; it reads ATDIAFALGVLALLGSRVPLVLKI. The helical transmembrane segment at 155 to 176 threads the bilayer; the sequence is FLMALAIIDDLGAIIIIALFYT. Residues 177 to 180 are Periplasmic-facing; the sequence is NDLS. The helical transmembrane segment at 181 to 200 threads the bilayer; the sequence is MASLGVAAVAIAVLAVLNLC. At 201-204 the chain is on the cytoplasmic side; the sequence is GVRR. A helical membrane pass occupies residues 205–222; the sequence is TGVYILVGVVLWTAVLKS. Position 223 (Gly223) is a topological domain, periplasmic. A helical membrane pass occupies residues 224 to 236; it reads VHATLAGVIVGFF. At 237 to 253 the chain is on the cytoplasmic side; that stretch reads IPLKEKHGRSPAKRLEH. Residues 254–272 form a helical membrane-spanning segment; it reads VLHPWVAYLILPLFAFANA. Residues 273 to 286 are Periplasmic-facing; it reads GVSLQGVTLDGLTS. The chain crosses the membrane as a helical span at residues 287–310; that stretch reads ILPLGIIAGLLIGKPLGISLFCWL. The Cytoplasmic portion of the chain corresponds to 311-339; it reads ALRLKLAHLPEGTTYQQIMVVGILCGIGF. A helical membrane pass occupies residues 340–350; sequence TMSIFIASLAF. The Periplasmic portion of the chain corresponds to 351–357; sequence GSVDPEL. The helical transmembrane segment at 358–380 threads the bilayer; sequence INWAKLGILVGSISSAVIGYSWL. At 381–388 the chain is on the cytoplasmic side; the sequence is RVRLRPSV.

This sequence belongs to the NhaA Na(+)/H(+) (TC 2.A.33) antiporter family.

The protein localises to the cell inner membrane. It carries out the reaction Na(+)(in) + 2 H(+)(out) = Na(+)(out) + 2 H(+)(in). Na(+)/H(+) antiporter that extrudes sodium in exchange for external protons. The protein is Na(+)/H(+) antiporter NhaA of Shigella flexneri.